Reading from the N-terminus, the 186-residue chain is ATP synthase subunit delta (186 aa).

It belongs to the ATPase delta chain family. F-type ATPases have 2 components, F(1) - the catalytic core - and F(0) - the membrane proton channel. F(1) has five subunits: alpha(3), beta(3), gamma(1), delta(1), epsilon(1). F(0) has three main subunits: a(1), b(2) and c(10-14). The alpha and beta chains form an alternating ring which encloses part of the gamma chain. F(1) is attached to F(0) by a central stalk formed by the gamma and epsilon chains, while a peripheral stalk is formed by the delta and b chains.

The protein localises to the cell inner membrane. In terms of biological role, f(1)F(0) ATP synthase produces ATP from ADP in the presence of a proton or sodium gradient. F-type ATPases consist of two structural domains, F(1) containing the extramembraneous catalytic core and F(0) containing the membrane proton channel, linked together by a central stalk and a peripheral stalk. During catalysis, ATP synthesis in the catalytic domain of F(1) is coupled via a rotary mechanism of the central stalk subunits to proton translocation. Its function is as follows. This protein is part of the stalk that links CF(0) to CF(1). It either transmits conformational changes from CF(0) to CF(1) or is implicated in proton conduction. The chain is ATP synthase subunit delta from Bradyrhizobium diazoefficiens (strain JCM 10833 / BCRC 13528 / IAM 13628 / NBRC 14792 / USDA 110).